A 2049-amino-acid polypeptide reads, in one-letter code: Polyunsaturated fatty acid synthase subunit B (2049 aa).

Ketosynthase family 3 (KS3) domains lie at 15–442 (EKRI…VFEE) and 468–908 (NMRI…LLSD). Active-site for beta-ketoacyl synthase 1 activity residues include cysteine 196, histidine 333, and histidine 368. The segment at 467–984 (NNMRIAITGM…LGETLAQEAD (518 aa)) is chain length factor (CLF) domain. The interval 1044–1377 (RVAFMYGEGR…QRSHVTGAMD (334 aa)) is acyltransferase (AT) domain. The segment at 1500–1531 (NKDNQPAVAPAATAAPTPKPKPAASSGKPVPS) is disordered. Residues 1505-1531 (PAVAPAATAAPTPKPKPAASSGKPVPS) show a composition bias toward low complexity. The segment at 1579 to 1887 (SRAFMKTYGV…SRANKLYELF (309 aa)) is enoyl reductase (ER) domain.

As to quaternary structure, component of the polyunsaturated fatty acid synthase complex composed of at least ORF-A, ORF-B and ORF-C.

The protein operates within lipid metabolism; fatty acid biosynthesis. Poliketide synthase-like protein; part of the polyunsaturated fatty acid synthase composed of the 3 PKS-like subunits A, B and C. While the saturated fatty acids (SFAs) in Thraustochytrium are produced by the conventional fatty acid synthase (FAS) pathway, polyunsaturated fatty acids (PUFAs) including docosahexeanoic acid (DHA) and docosapentaenoic acid (DPA) are synthesized via an anaerobical PKS pathway. PUFA synthase assimilates fatty acyl-CoA, the product of FAS, as the starter unit to synthesize DPA, and this starter unit may be butyryl-CoA, hexanoyl-CoA, or octanoyl-CoA. DPA and DHA biosynthesis seem to differ by the reduction at the N-3 position by PUFA synthase, not the extension of carbon chain. In DHA biosynthesis, PUFA synthase extends the fatty acyl chain from the methyl toward the carboxyl end, and the double bond is formed when the carbon chain is growing, instead of afterward. Therefore, PUFA synthase is unable to transform DPA to DHA, suggesting that DPA is not the precursor of DHA. Moreover, DPA molecule is partly extended by FAS KS domain, so DPA biosynthesis is less dependent on PUFA synthase KS domain than DHA. This Thraustochytrium sp. (strain ATCC 26185 / S-3) protein is Polyunsaturated fatty acid synthase subunit B.